A 475-amino-acid chain; its full sequence is MKYELVVGLEVHCQLNTNSKAFCGCSALFGKPANTNVCPVCLALPGALPVLNRRVVEDAVKIGLATGCSVASHSILARKNYFYPDLPKGYQISQYEEPICSEGMIRIDVGEGQRDIRLIRIHIEEDAGKSIHDIGEDTYIDVNRSGVPLLEIVSYPDMRTAKEASAYLQKVRQIVKYLGISDGNMEEGSLRCDANVSIRPYGSEEYGTRTEIKNMNSFKNVEKAIEFEANRHSEIIDAGGAIVQETRLWDADKGETRSMRGKEFAHDYRYFPDPDLVPVLVDDDMLERMRLELPEFPEDRAARFVSEFAIPAYDAAVLTVDREVADYFEETVRVSGDAKVASNWVMGEVMRTLKEKYLDIAEFGISSLRLGELIRLIGAGTISNTIAKQVFEIMMSDEAAAEVIVTREGLAQVSDFGAIDMVLQEVLDANPGQLADYRAGKTKLFGFFVGQCMARMKGKGNPAIVNDLLQKKLAG.

This sequence belongs to the GatB/GatE family. GatB subfamily. As to quaternary structure, heterotrimer of A, B and C subunits.

The enzyme catalyses L-glutamyl-tRNA(Gln) + L-glutamine + ATP + H2O = L-glutaminyl-tRNA(Gln) + L-glutamate + ADP + phosphate + H(+). The catalysed reaction is L-aspartyl-tRNA(Asn) + L-glutamine + ATP + H2O = L-asparaginyl-tRNA(Asn) + L-glutamate + ADP + phosphate + 2 H(+). Functionally, allows the formation of correctly charged Asn-tRNA(Asn) or Gln-tRNA(Gln) through the transamidation of misacylated Asp-tRNA(Asn) or Glu-tRNA(Gln) in organisms which lack either or both of asparaginyl-tRNA or glutaminyl-tRNA synthetases. The reaction takes place in the presence of glutamine and ATP through an activated phospho-Asp-tRNA(Asn) or phospho-Glu-tRNA(Gln). This is Aspartyl/glutamyl-tRNA(Asn/Gln) amidotransferase subunit B from Chlorobium phaeobacteroides (strain DSM 266 / SMG 266 / 2430).